Reading from the N-terminus, the 299-residue chain is GTPase Era (299 aa).

Residues 5–172 enclose the Era-type G domain; sequence KSGFVSIIGR…IDVLKTYLPE (168 aa). The tract at residues 13–20 is G1; it reads GRPNVGKS. GTP is bound at residue 13 to 20; the sequence is GRPNVGKS. Residues 39 to 43 form a G2 region; the sequence is QTTRN. Positions 60-63 are G3; the sequence is DTPG. Residues 60–64 and 122–125 contribute to the GTP site; these read DTPGI and NKID. A G4 region spans residues 122–125; the sequence is NKID. The tract at residues 151–153 is G5; the sequence is ISA. Positions 203-280 constitute a KH type-2 domain; that stretch reads TSEEIPHAIG…YLELWVKVQR (78 aa).

Belongs to the TRAFAC class TrmE-Era-EngA-EngB-Septin-like GTPase superfamily. Era GTPase family. In terms of assembly, monomer.

It localises to the cytoplasm. The protein resides in the cell membrane. Functionally, an essential GTPase that binds both GDP and GTP, with rapid nucleotide exchange. Plays a role in 16S rRNA processing and 30S ribosomal subunit biogenesis and possibly also in cell cycle regulation and energy metabolism. The chain is GTPase Era from Staphylococcus aureus (strain bovine RF122 / ET3-1).